Here is a 246-residue protein sequence, read N- to C-terminus: uncharacterized protein (246 aa).

This sequence belongs to the IIV-6 170L family.

This is an uncharacterized protein from Acheta domesticus (House cricket).